Consider the following 181-residue polypeptide: Diphosphoinositol polyphosphate phosphohydrolase NUDT4B (181 aa).

Residues Arg-10, 18–20, and 39–41 contribute to the substrate site; these read KKR and SSR. The Nudix hydrolase domain occupies 18-145; the sequence is KKRAACLCFR…VHAEYLEKLK (128 aa). Mg(2+) is bound by residues Gly-50 and Glu-66. The Nudix box motif lies at 51–72; the sequence is GGMEPEEEPGGAAVREVYEEAG. Residue Glu-69 is the Proton acceptor of the active site. Mg(2+) is bound at residue Glu-70. Substrate is bound by residues 90–92, Arg-116, and Lys-134; that span reads RKH.

Belongs to the Nudix hydrolase family. DIPP subfamily. Requires Mg(2+) as cofactor. It depends on Mn(2+) as a cofactor.

It localises to the cytoplasm. The enzyme catalyses diphospho-myo-inositol polyphosphate + H2O = myo-inositol polyphosphate + phosphate.. Functionally, cleaves a beta-phosphate from the diphosphate groups in PP-InsP5 (diphosphoinositol pentakisphosphate), PP-InsP4 and [PP]2-InsP4 (bisdiphosphoinositol tetrakisphosphate), suggesting that it may play a role in signal transduction. Also able to catalyze the hydrolysis of dinucleoside oligophosphate Ap6A, but not Ap5A. The major reaction products are ADP and p4a from Ap6A. Also able to hydrolyze 5-phosphoribose 1-diphosphate. Does not play a role in U8 snoRNA decapping activity. Binds U8 snoRNA. The sequence is that of Diphosphoinositol polyphosphate phosphohydrolase NUDT4B from Homo sapiens (Human).